Here is an 84-residue protein sequence, read N- to C-terminus: Large ribosomal subunit protein bL27 (84 aa).

Residues 1–22 form a disordered region; that stretch reads MAHKKGASSTRNGRDSNAQRLG. Polar residues predominate over residues 7 to 19; the sequence is ASSTRNGRDSNAQ.

The protein belongs to the bacterial ribosomal protein bL27 family.

The sequence is that of Large ribosomal subunit protein bL27 from Streptomyces avermitilis (strain ATCC 31267 / DSM 46492 / JCM 5070 / NBRC 14893 / NCIMB 12804 / NRRL 8165 / MA-4680).